Reading from the N-terminus, the 1123-residue chain is Leucine-rich repeat receptor-like protein kinase PEPR1 (1123 aa).

Positions 1 to 28 (MKNLGGLFKILLLFFCLFLSTHIISVSC) are cleaved as a signal peptide. Over 29–769 (LNSDGLTLLS…SRKSGLSTWQ (741 aa)) the chain is Extracellular. Residues 31–53 (SDGLTLLSLLKHLDRVPPQVTST) form an LRR 1 repeat. Residues Asn57, Asn81, Asn110, and Asn121 are each glycosylated (N-linked (GlcNAc...) asparagine). LRR repeat units follow at residues 74–98 (SKNV…IGEL), 99–122 (KSLQ…LGNC), 124–145 (KLAT…TLDS), 146–170 (LKRL…LFRI), 171–194 (PKLQ…IGDA), 196–218 (ELVE…IGNS), and 219–243 (SSLQ…NLLG). 2 N-linked (GlcNAc...) asparagine glycosylation sites follow: Asn182 and Asn217. Residues Asn244, Asn252, Asn289, Asn302, Asn316, Asn321, and Asn337 are each glycosylated (N-linked (GlcNAc...) asparagine). 20 LRR repeats span residues 245 to 266 (LTTL…SPNC), 267 to 290 (KNLL…LGNC), 292 to 314 (SLDA…LGML), 315 to 338 (KNLT…LGNC), 340 to 362 (SLNL…LGKL), 363 to 386 (RKLE…IWKS), 388 to 410 (SLTQ…MTEM), 412 to 434 (KLKI…LGVN), 435 to 458 (SSLE…LCHG), 459 to 482 (RKLR…IGHC), 484 to 505 (TIRR…FSQD), 506 to 529 (HSLS…LGSC), 530 to 553 (KNLS…LGNL), 554 to 577 (QNLG…LSNC), 579 to 600 (SLER…NFSN), 601 to 625 (WKGL…LPEL), 626 to 650 (KKLS…GLIE), 652 to 674 (LIYD…LGDL), 675 to 696 (IKLT…VLKG), and 697 to 721 (LTSL…LEGQ). Residues Asn398, Asn420, and Asn434 are each glycosylated (N-linked (GlcNAc...) asparagine). The N-linked (GlcNAc...) asparagine glycan is linked to Asn494. N-linked (GlcNAc...) asparagine glycans are attached at residues Asn531, Asn536, Asn560, Asn591, and Asn597. Asn681 and Asn686 each carry an N-linked (GlcNAc...) asparagine glycan. N-linked (GlcNAc...) asparagine glycosylation occurs at Asn745. Residues 770–790 (IVLIAVLSSLLVLVVVLALVF) form a helical membrane-spanning segment. Over 791-1123 (ICLRRRKGRP…ARSCSSDSVR (333 aa)) the chain is Cytoplasmic. At Thr824 the chain carries Phosphothreonine. Residues 827-1115 (LNEKYTIGRG…LLEDVKHLAR (289 aa)) form the Protein kinase domain. ATP-binding positions include 833-841 (IGRGAHGIV) and Lys855. A phosphotyrosine mark is found at Tyr901 and Tyr941. The Proton acceptor role is filled by Asp954. Tyr995 carries the post-translational modification Phosphotyrosine.

It belongs to the protein kinase superfamily. Ser/Thr protein kinase family. In terms of assembly, interacts with PEP1 and BAK1. Interacts with BIK1 and PBL1. Post-translationally, N-glycosylated.

The protein localises to the cell membrane. It carries out the reaction L-seryl-[protein] + ATP = O-phospho-L-seryl-[protein] + ADP + H(+). It catalyses the reaction L-threonyl-[protein] + ATP = O-phospho-L-threonyl-[protein] + ADP + H(+). Its function is as follows. Acts as a receptor for PEP defense peptides. Unlike typical immune receptors, senses an endogenous elicitor that potentiates pathogen-associated molecular pattern (PAMP)-inducible plant responses. Involved in PAMP-triggered immunity (PTI) signaling. Interacts with and phosphorylates the kinase BIK1, a central rate-limiting kinase in PTI signaling. The chain is Leucine-rich repeat receptor-like protein kinase PEPR1 (PEPR1) from Arabidopsis thaliana (Mouse-ear cress).